The primary structure comprises 137 residues: Large ribosomal subunit protein uL16 (137 aa).

Belongs to the universal ribosomal protein uL16 family. As to quaternary structure, part of the 50S ribosomal subunit.

Functionally, binds 23S rRNA and is also seen to make contacts with the A and possibly P site tRNAs. This Pseudomonas aeruginosa (strain LESB58) protein is Large ribosomal subunit protein uL16.